Here is a 511-residue protein sequence, read N- to C-terminus: 3-octaprenyl-4-hydroxybenzoate carboxy-lyase (511 aa).

Mn(2+) is bound at residue Asn176. Prenylated FMN contacts are provided by residues 179-181 (IYR), 193-195 (RWL), and 198-199 (RG). A Mn(2+)-binding site is contributed by Glu242. Residue Asp311 is the Proton donor of the active site.

It belongs to the UbiD family. In terms of assembly, homohexamer. Requires prenylated FMN as cofactor. Mn(2+) serves as cofactor.

It localises to the cell membrane. It catalyses the reaction a 4-hydroxy-3-(all-trans-polyprenyl)benzoate + H(+) = a 2-(all-trans-polyprenyl)phenol + CO2. It functions in the pathway cofactor biosynthesis; ubiquinone biosynthesis. Functionally, catalyzes the decarboxylation of 3-octaprenyl-4-hydroxy benzoate to 2-octaprenylphenol, an intermediate step in ubiquinone biosynthesis. In Laribacter hongkongensis (strain HLHK9), this protein is 3-octaprenyl-4-hydroxybenzoate carboxy-lyase.